The following is a 126-amino-acid chain: Tachykinin-3 (126 aa).

The first 20 residues, 1–20 (MRSTLLFAVILALSSARSLG), serve as a signal peptide directing secretion. A propeptide spanning residues 21–83 (AVCEESQEQV…VGPKESPLPQ (63 aa)) is cleaved from the precursor. Residue Met95 is modified to Methionine amide. Residues 99–126 (NLQPDTPVDINQENIPSFGTFKYPPSVE) constitute a propeptide that is removed on maturation. Positions 102 to 126 (PDTPVDINQENIPSFGTFKYPPSVE) are disordered.

It belongs to the tachykinin family.

It is found in the secreted. Functionally, tachykinins are active peptides which excite neurons, evoke behavioral responses, are potent vasodilators and secretagogues, and contract (directly or indirectly) many smooth muscles. Is a critical central regulator of gonadal function. In Bos taurus (Bovine), this protein is Tachykinin-3 (TAC3).